The following is a 715-amino-acid chain: Interferon-induced GTP-binding protein Mx2 (715 aa).

The region spanning 115–387 (DLALPAIAVI…LIMHIQKSLP (273 aa)) is the Dynamin-type G domain. Residues 125–132 (GDQSSGKS) are G1 motif. A GTP-binding site is contributed by 125-132 (GDQSSGKS). The segment at 150 to 152 (VTR) is G2 motif. Residues 225-228 (DLPG) form a G3 motif region. Residues 225 to 229 (DLPGI) and 294 to 297 (TKPD) each bind GTP. Residues 294–297 (TKPD) are G4 motif. The G5 motif stretch occupies residues 326–329 (KCRG). In terms of domain architecture, GED spans 623–714 (FTEIGIHLNA…ALCQFSSKEI (92 aa)).

Belongs to the TRAFAC class dynamin-like GTPase superfamily. Dynamin/Fzo/YdjA family.

The protein resides in the cytoplasm. It is found in the nucleus. Its subcellular location is the nuclear pore complex. Functionally, interferon-induced dynamin-like GTPase with potent antiviral activity against human immunodeficiency virus type 1 (HIV-1). Acts by targeting the viral capsid and affects the nuclear uptake and/or stability of the HIV-1 replication complex and the subsequent chromosomal integration of the proviral DNA. Exhibits antiviral activity also against simian immunodeficiency virus (SIV-mnd). May play a role in regulating nucleocytoplasmic transport and cell-cycle progression. This is Interferon-induced GTP-binding protein Mx2 (MX2) from Homo sapiens (Human).